Reading from the N-terminus, the 690-residue chain is Eukaryotic translation initiation factor 3 subunit B (690 aa).

Residues 1-11 (MAKKKSEEHSS) are compositionally biased toward basic and acidic residues. A disordered region spans residues 1–33 (MAKKKSEEHSSADANDSDYQEEPNFDDPPNFVD). Positions 15–25 (NDSDYQEEPNF) are enriched in acidic residues. The 85-residue stretch at 57 to 141 (SVVVVDNIPK…HTFAVNLFTD (85 aa)) folds into the RRM domain. WD repeat units lie at residues 207-246 (TRER…KIQK), 293-331 (DGMS…LLDL), 334-369 (IKIP…TLME), 442-484 (EIRE…KPSL), and 530-575 (PDHF…IKRT). Residues 614–645 (QKDRLRLTRASKELLEKRSQLRETFMEYRNKR) adopt a coiled-coil conformation.

This sequence belongs to the eIF-3 subunit B family. Component of the eukaryotic translation initiation factor 3 (eIF-3) complex. The eIF-3 complex interacts with pix. Interacts with mxt.

Its subcellular location is the cytoplasm. RNA-binding component of the eukaryotic translation initiation factor 3 (eIF-3) complex, which is involved in protein synthesis of a specialized repertoire of mRNAs and, together with other initiation factors, stimulates binding of mRNA and methionyl-tRNAi to the 40S ribosome. The eIF-3 complex specifically targets and initiates translation of a subset of mRNAs involved in cell proliferation. In Drosophila willistoni (Fruit fly), this protein is Eukaryotic translation initiation factor 3 subunit B.